We begin with the raw amino-acid sequence, 243 residues long: Probable 2-phosphosulfolactate phosphatase (243 aa).

It belongs to the ComB family. The cofactor is Mg(2+).

It carries out the reaction (2R)-O-phospho-3-sulfolactate + H2O = (2R)-3-sulfolactate + phosphate. The protein is Probable 2-phosphosulfolactate phosphatase of Prochlorococcus marinus (strain SARG / CCMP1375 / SS120).